Consider the following 194-residue polypeptide: Pyridoxine/pyridoxamine 5'-phosphate oxidase (194 aa).

Residues 42–47 (RVVLLK), 57–58 (FT), Arg-63, Lys-64, and Gln-86 each bind FMN. Lys-47 serves as a coordination point for substrate. 3 residues coordinate substrate: Tyr-104, Arg-108, and Ser-112. Residues 121-122 (QS) and Trp-166 each bind FMN. 172–174 (RIH) is a substrate binding site. Arg-176 contacts FMN.

The protein belongs to the pyridoxamine 5'-phosphate oxidase family. Homodimer. The cofactor is FMN.

The enzyme catalyses pyridoxamine 5'-phosphate + O2 + H2O = pyridoxal 5'-phosphate + H2O2 + NH4(+). The catalysed reaction is pyridoxine 5'-phosphate + O2 = pyridoxal 5'-phosphate + H2O2. It functions in the pathway cofactor metabolism; pyridoxal 5'-phosphate salvage; pyridoxal 5'-phosphate from pyridoxamine 5'-phosphate: step 1/1. The protein operates within cofactor metabolism; pyridoxal 5'-phosphate salvage; pyridoxal 5'-phosphate from pyridoxine 5'-phosphate: step 1/1. Its function is as follows. Catalyzes the oxidation of either pyridoxine 5'-phosphate (PNP) or pyridoxamine 5'-phosphate (PMP) into pyridoxal 5'-phosphate (PLP). This chain is Pyridoxine/pyridoxamine 5'-phosphate oxidase, found in Ehrlichia ruminantium (strain Welgevonden).